We begin with the raw amino-acid sequence, 607 residues long: Elongation factor 4 (607 aa).

A tr-type G domain is found at 6 to 188 (DRIRNFSIIA…AIVARIPAPK (183 aa)). GTP-binding positions include 18 to 23 (DHGKST) and 135 to 138 (NKID).

It belongs to the TRAFAC class translation factor GTPase superfamily. Classic translation factor GTPase family. LepA subfamily.

It localises to the cell inner membrane. It carries out the reaction GTP + H2O = GDP + phosphate + H(+). Its function is as follows. Required for accurate and efficient protein synthesis under certain stress conditions. May act as a fidelity factor of the translation reaction, by catalyzing a one-codon backward translocation of tRNAs on improperly translocated ribosomes. Back-translocation proceeds from a post-translocation (POST) complex to a pre-translocation (PRE) complex, thus giving elongation factor G a second chance to translocate the tRNAs correctly. Binds to ribosomes in a GTP-dependent manner. The chain is Elongation factor 4 from Rhizorhabdus wittichii (strain DSM 6014 / CCUG 31198 / JCM 15750 / NBRC 105917 / EY 4224 / RW1) (Sphingomonas wittichii).